The primary structure comprises 654 residues: MTQITERELKKKYLDLLSQRFDTPEKLATEIINLESILELPKGTEHFVSDLHGEYEAFQHVLRNGSGNVRAKINDIFKDKLSTKELNDLTALVYYPEDKLQLIKCDFQNYGQLNVWYITTIEHLIQLIKYCSSKYTRSKLRRALPEQYVFIVEELLYKNNEFKNKKSYYETLVNQVIELKQADDLIIGLAYSVQRLVVDHLHVVGDIYDRGPQPDKIMDTLINYHSLDIQWGNHDVLWVGAYAGSKVCLANLLRICARYDNLDIVEDAYGINLRPLLTLAEKYYDADNPAFKPKKRPDKHERLTQREESQITKIHQAIAMIQFKLEIPVIKRRPNFEMDERLVLEKVNYDTNEITVYRKTYPLKDTCFQTVNRDNPAELLPEEEEVMNKLLLSFQQSEKLRRHMSFLMRKGSLYLPCNGNLLIHGCIPVDENGEMESFEIDGQTYSGQELLDVFEYHVRKSFDEKENTDDLSTDLVWYLWTGKYSSLFGKRAMTTFERYFIADKASHKEEKNPYYHLREDVNMVRKMLSDFGLNPDEGRIINGHTPVKEINGEDPIKADGKMLVIDGGFSKAYQSTTGIAGYTLLYNSFGMQLVAHQQFNAKEKILSEGIEELSIKRIVDKELQRKKIRNTNKGKELQAQIDILKMLMHDRYLD.

The tract at residues 288–307 (NPAFKPKKRPDKHERLTQRE) is disordered. A compositionally biased stretch (basic and acidic residues) spans 298-307 (DKHERLTQRE).

This sequence belongs to the FBPase class 3 family. Mn(2+) serves as cofactor.

The catalysed reaction is beta-D-fructose 1,6-bisphosphate + H2O = beta-D-fructose 6-phosphate + phosphate. It functions in the pathway carbohydrate biosynthesis; gluconeogenesis. This chain is Fructose-1,6-bisphosphatase class 3, found in Staphylococcus aureus (strain bovine RF122 / ET3-1).